The primary structure comprises 111 residues: Ribosome-binding factor A (111 aa).

This sequence belongs to the RbfA family. As to quaternary structure, monomer. Binds 30S ribosomal subunits, but not 50S ribosomal subunits or 70S ribosomes.

It is found in the cytoplasm. Its function is as follows. One of several proteins that assist in the late maturation steps of the functional core of the 30S ribosomal subunit. Associates with free 30S ribosomal subunits (but not with 30S subunits that are part of 70S ribosomes or polysomes). Required for efficient processing of 16S rRNA. May interact with the 5'-terminal helix region of 16S rRNA. In Helicobacter pylori (strain Shi470), this protein is Ribosome-binding factor A.